A 175-amino-acid chain; its full sequence is Small ribosomal subunit protein uS4 (175 aa).

One can recognise an S4 RNA-binding domain in the interval 105-169 (RRLQTIVYRQ…SPLADSLHPA (65 aa)).

It belongs to the universal ribosomal protein uS4 family. Part of the 30S ribosomal subunit. Contacts protein S5. The interaction surface between S4 and S5 is involved in control of translational fidelity.

In terms of biological role, one of the primary rRNA binding proteins, it binds directly to 16S rRNA where it nucleates assembly of the body of the 30S subunit. Its function is as follows. With S5 and S12 plays an important role in translational accuracy. The chain is Small ribosomal subunit protein uS4 from Haloquadratum walsbyi (strain DSM 16790 / HBSQ001).